The sequence spans 343 residues: Aspartate carbamoyltransferase catalytic subunit (343 aa).

Arg54 and Thr55 together coordinate carbamoyl phosphate. Residue Lys82 coordinates L-aspartate. Residues Arg104, His134, and Gln137 each coordinate carbamoyl phosphate. Residues Arg177 and Arg232 each coordinate L-aspartate. The carbamoyl phosphate site is built by Gly277 and Pro278. The interval 323–343 is disordered; that stretch reads PDQSNPQRNVTNTSNWQETKR.

The protein belongs to the aspartate/ornithine carbamoyltransferase superfamily. ATCase family. As to quaternary structure, heterododecamer (2C3:3R2) of six catalytic PyrB chains organized as two trimers (C3), and six regulatory PyrI chains organized as three dimers (R2).

The catalysed reaction is carbamoyl phosphate + L-aspartate = N-carbamoyl-L-aspartate + phosphate + H(+). It participates in pyrimidine metabolism; UMP biosynthesis via de novo pathway; (S)-dihydroorotate from bicarbonate: step 2/3. Its function is as follows. Catalyzes the condensation of carbamoyl phosphate and aspartate to form carbamoyl aspartate and inorganic phosphate, the committed step in the de novo pyrimidine nucleotide biosynthesis pathway. This chain is Aspartate carbamoyltransferase catalytic subunit, found in Renibacterium salmoninarum (strain ATCC 33209 / DSM 20767 / JCM 11484 / NBRC 15589 / NCIMB 2235).